The following is a 68-amino-acid chain: UPF0434 protein H16_A0605 (68 aa).

Belongs to the UPF0434 family.

This is UPF0434 protein H16_A0605 from Cupriavidus necator (strain ATCC 17699 / DSM 428 / KCTC 22496 / NCIMB 10442 / H16 / Stanier 337) (Ralstonia eutropha).